Reading from the N-terminus, the 223-residue chain is MHIVIMGCGRVGSALAQALEQQGHTVAVIDRDPTSFRRLGSSFGGRRVTGIGFDQDTLREAGIEEAGAFAAVSSGDNSNIIAARVAREMFGVENVAARIYDPRRAEVYQRLGIPTVATVRWTADQMLRRLLPSGAEPLWRDPTGGVQLAEVHTSSSWVGHKISRLQEETGVRVAFVTRLGEAILPSSQTVLQEGDLVHVMMRTDEVHKVEAAFAKGPEEEGGH.

One can recognise an RCK N-terminal domain in the interval 1–118 (MHIVIMGCGR…QRLGIPTVAT (118 aa)). NAD(+) contacts are provided by residues 7–11 (GCGRV), Asp30, 73–74 (SS), and Arg98. Positions 133 to 215 (SGAEPLWRDP…VHKVEAAFAK (83 aa)) constitute an RCK C-terminal domain.

Functionally, part of a potassium transport system. The polypeptide is Trk system potassium uptake protein TrkA (trkA) (Streptomyces coelicolor (strain ATCC BAA-471 / A3(2) / M145)).